The chain runs to 248 residues: Clathrin light chain A (248 aa).

Positions M1–S93 are disordered. A compositionally biased stretch (gly residues) spans A13–G25. Positions V100 to R162 are involved in binding clathrin heavy chain. Residues S105 and S206 each carry the phosphoserine modification. K223 carries the N6-acetyllysine modification. Residue S236 is modified to Phosphoserine. Position 242 is an N6-acetyllysine (K242).

It belongs to the clathrin light chain family. Clathrin coats are formed from molecules containing 3 heavy chains and 3 light chains. Interacts with CALY; the interaction stimulates clathrin self-assembly and clathrin-mediated endocytosis. Interacts with CKAP5 and TACC3 forming the TACC3/ch-TOG/clathrin complex located at spindle inter-microtubules bridges; the complex implicates clathrin triskelions.

The protein resides in the cytoplasmic vesicle membrane. Its subcellular location is the membrane. It is found in the coated pit. The protein localises to the cytoplasm. It localises to the cytoskeleton. The protein resides in the spindle. Functionally, clathrin is the major protein of the polyhedral coat of coated pits and vesicles. Acts as a component of the TACC3/ch-TOG/clathrin complex proposed to contribute to stabilization of kinetochore fibers of the mitotic spindle by acting as inter-microtubule bridge. This is Clathrin light chain A (Clta) from Rattus norvegicus (Rat).